Reading from the N-terminus, the 322-residue chain is DNA primase small subunit PriS (322 aa).

Catalysis depends on residues aspartate 86, aspartate 88, and aspartate 226.

This sequence belongs to the eukaryotic-type primase small subunit family. Heterodimer of a small subunit (PriS) and a large subunit (PriL). It depends on Mg(2+) as a cofactor. Requires Mn(2+) as cofactor.

Its function is as follows. Catalytic subunit of DNA primase, an RNA polymerase that catalyzes the synthesis of short RNA molecules used as primers for DNA polymerase during DNA replication. The small subunit contains the primase catalytic core and has DNA synthesis activity on its own. Binding to the large subunit stabilizes and modulates the activity, increasing the rate of DNA synthesis while decreasing the length of the DNA fragments, and conferring RNA synthesis capability. The DNA polymerase activity may enable DNA primase to also catalyze primer extension after primer synthesis. May also play a role in DNA repair. This chain is DNA primase small subunit PriS, found in Thermoplasma acidophilum (strain ATCC 25905 / DSM 1728 / JCM 9062 / NBRC 15155 / AMRC-C165).